The primary structure comprises 293 residues: Acidic endochitinase (293 aa).

The first 22 residues, 1–22 (MEKCFNIIPSLLLISLLIKSSN), serve as a signal peptide directing secretion. The GH18 domain occupies 24 to 293 (AGIAVYWGQN…GYSNAIKGSV (270 aa)). 2 disulfide bridges follow: Cys-43–Cys-90 and Cys-73–Cys-80. Glu-150 (proton donor) is an active-site residue. A disulfide bridge connects residues Cys-179 and Cys-208.

This sequence belongs to the glycosyl hydrolase 18 family. Chitinase class II subfamily.

Its subcellular location is the secreted. It localises to the extracellular space. It carries out the reaction Random endo-hydrolysis of N-acetyl-beta-D-glucosaminide (1-&gt;4)-beta-linkages in chitin and chitodextrins.. Functionally, this protein functions as a defense against chitin containing fungal pathogens. The sequence is that of Acidic endochitinase from Cicer arietinum (Chickpea).